A 534-amino-acid chain; its full sequence is Pentatricopeptide repeat-containing protein At2g20540 (534 aa).

11 PPR repeats span residues 41 to 71 (SSFM…VSNP), 72 to 106 (NVFL…SFEL), 108 to 142 (DRFT…GPRF), 143 to 173 (HVVT…MYER), 174 to 208 (DVIS…TIVS), 209 to 239 (WTAM…GIEP), 240 to 274 (DEIS…GFLK), 275 to 305 (QTGV…MEGK), 306 to 340 (DVIS…KVKP), 341 to 371 (NGIT…MRQD), and 377 to 407 (KIEH…MPMK). The type E motif stretch occupies residues 412-487 (IWGSLLSSCR…TPGGSLIEVN (76 aa)). A type E(+) motif region spans residues 488–518 (NIVQEFVSGDNSKPFWTEISIVLQLFTSHQD).

It belongs to the PPR family. PCMP-E subfamily.

In Arabidopsis thaliana (Mouse-ear cress), this protein is Pentatricopeptide repeat-containing protein At2g20540 (PCMP-E78).